The following is a 315-amino-acid chain: Methenyltetrahydromethanopterin cyclohydrolase (315 aa).

This sequence belongs to the MCH family.

Its subcellular location is the cytoplasm. The enzyme catalyses 5,10-methenyl-5,6,7,8-tetrahydromethanopterin + H2O = N(5)-formyl-5,6,7,8-tetrahydromethanopterin + H(+). The protein operates within one-carbon metabolism; methanogenesis from CO(2); 5,10-methenyl-5,6,7,8-tetrahydromethanopterin from CO(2): step 3/3. Catalyzes the reversible interconversion of 5-formyl-H(4)MPT to methenyl-H(4)MPT(+). This Methanosphaerula palustris (strain ATCC BAA-1556 / DSM 19958 / E1-9c) protein is Methenyltetrahydromethanopterin cyclohydrolase.